We begin with the raw amino-acid sequence, 179 residues long: uncharacterized protein (179 aa).

A compositionally biased stretch (basic and acidic residues) spans 1-14 (MTKKVKLDQDEINN). Disordered stretches follow at residues 1–90 (MTKK…NNFC) and 121–147 (HKKS…DKKV). 2 stretches are compositionally biased toward low complexity: residues 15–90 (KNKN…NNFC) and 126–137 (RSQSQSSLNSFD). The segment covering 138–147 (QDNKSKDKKV) has biased composition (basic and acidic residues).

This is an uncharacterized protein from Dictyostelium discoideum (Social amoeba).